Reading from the N-terminus, the 276-residue chain is Ribosomal RNA small subunit methyltransferase A (276 aa).

Residues Asn-27, Leu-29, Gly-54, Glu-75, Asp-101, and Asn-123 each coordinate S-adenosyl-L-methionine.

This sequence belongs to the class I-like SAM-binding methyltransferase superfamily. rRNA adenine N(6)-methyltransferase family. RsmA subfamily.

It localises to the cytoplasm. It catalyses the reaction adenosine(1518)/adenosine(1519) in 16S rRNA + 4 S-adenosyl-L-methionine = N(6)-dimethyladenosine(1518)/N(6)-dimethyladenosine(1519) in 16S rRNA + 4 S-adenosyl-L-homocysteine + 4 H(+). In terms of biological role, specifically dimethylates two adjacent adenosines (A1518 and A1519) in the loop of a conserved hairpin near the 3'-end of 16S rRNA in the 30S particle. May play a critical role in biogenesis of 30S subunits. The chain is Ribosomal RNA small subunit methyltransferase A from Bartonella quintana (strain Toulouse) (Rochalimaea quintana).